A 265-amino-acid polypeptide reads, in one-letter code: Small ribosomal subunit protein uS2 (265 aa).

The disordered stretch occupies residues 226–265 (AAAPNSASVREEEFSADAADEGKGRRAPAKKGDKKADAAE). The span at 245-265 (DEGKGRRAPAKKGDKKADAAE) shows a compositional bias: basic and acidic residues.

This sequence belongs to the universal ribosomal protein uS2 family.

The polypeptide is Small ribosomal subunit protein uS2 (Xanthomonas axonopodis pv. citri (strain 306)).